The chain runs to 374 residues: Chaperone protein DnaJ (374 aa).

In terms of domain architecture, J spans 5 to 70 (CYYEILNVSK…GKRSRYDQFG (66 aa)). The segment at 130 to 207 (GVEKEINIPR…CYGSGKIKKQ (78 aa)) adopts a CR-type zinc-finger fold. Zn(2+)-binding residues include C143, C146, C159, C162, C181, C184, C195, and C198. CXXCXGXG motif repeat units follow at residues 143-150 (CDSCDGTG), 159-166 (CHACHGQG), 181-188 (CPVCNGTG), and 195-202 (CDDCYGSG).

Belongs to the DnaJ family. In terms of assembly, homodimer. Requires Zn(2+) as cofactor.

It is found in the cytoplasm. Functionally, participates actively in the response to hyperosmotic and heat shock by preventing the aggregation of stress-denatured proteins and by disaggregating proteins, also in an autonomous, DnaK-independent fashion. Unfolded proteins bind initially to DnaJ; upon interaction with the DnaJ-bound protein, DnaK hydrolyzes its bound ATP, resulting in the formation of a stable complex. GrpE releases ADP from DnaK; ATP binding to DnaK triggers the release of the substrate protein, thus completing the reaction cycle. Several rounds of ATP-dependent interactions between DnaJ, DnaK and GrpE are required for fully efficient folding. Also involved, together with DnaK and GrpE, in the DNA replication of plasmids through activation of initiation proteins. The polypeptide is Chaperone protein DnaJ (Francisella philomiragia subsp. philomiragia (strain ATCC 25017 / CCUG 19701 / FSC 153 / O#319-036)).